A 534-amino-acid chain; its full sequence is Coiled-coil domain-containing protein 183 (534 aa).

3 coiled-coil regions span residues 10–54 (EAQI…NLRR), 136–209 (DATK…DMTV), and 321–406 (RFLA…LLVI).

The sequence is that of Coiled-coil domain-containing protein 183 (Ccdc183) from Mus musculus (Mouse).